A 198-amino-acid chain; its full sequence is Guanylate kinase (198 aa).

Residues proline 4–serine 186 enclose the Guanylate kinase-like domain. Glycine 14 to threonine 19 contacts ATP. Residue serine 37–lysine 51 coordinates substrate. Catalysis depends on residues arginine 44, arginine 137, and arginine 148. Residue asparagine 171 to aspartate 172 coordinates ATP.

This sequence belongs to the guanylate kinase family. As to quaternary structure, monomer. Interacts with RD3. Widely expressed. In retina is expressed in inner segment, outer nuclear layer, outer plexiform layer, inner plexiform layer, and ganglion cell layer (at protein level).

It is found in the photoreceptor inner segment. The protein localises to the cytoplasm. It localises to the cytosol. Its subcellular location is the mitochondrion. It carries out the reaction GMP + ATP = GDP + ADP. In terms of biological role, catalyzes the phosphorylation of GMP to GDP. Essential enzyme for recycling GMP and indirectly, cyclic GMP (cGMP). Involved in the cGMP metabolism in photoreceptors. The sequence is that of Guanylate kinase from Mus musculus (Mouse).